The primary structure comprises 493 residues: Solute carrier family 2, facilitated glucose transporter member 3 (493 aa).

Residues 1-10 lie on the Cytoplasmic side of the membrane; the sequence is MGTAKVTPSL. Residues 11 to 32 form a helical membrane-spanning segment; it reads VFAVTVATIGSFQFGYNTGVIN. The Extracellular portion of the chain corresponds to 33 to 64; sequence APETIIKDFLNYTLEERLEDLPREGLLTTLWS. An N-linked (GlcNAc...) asparagine glycan is attached at Asn-43. The chain crosses the membrane as a helical span at residues 65 to 85; the sequence is LCVAIFSVGGMIGSFSVGLFV. Residues 86-90 lie on the Cytoplasmic side of the membrane; the sequence is NRFGR. A helical membrane pass occupies residues 91–111; it reads RNSMLLVNLIAILGGCLMGFA. Over 112-118 the chain is Extracellular; that stretch reads KIAESVE. The helical transmembrane segment at 119 to 142 threads the bilayer; it reads MLILGRLIIGIFCGLCTGFVPMYI. Residues 143 to 153 are Cytoplasmic-facing; the sequence is GEVSPTALRGA. Residues 154-174 traverse the membrane as a helical segment; it reads FGTLNQLGIVVGILVAQVFGL. A D-glucose-binding site is contributed by Gln-159. Residues 175–183 lie on the Extracellular side of the membrane; sequence DFILGSEEL. The helical transmembrane segment at 184–204 threads the bilayer; the sequence is WPGLLGLTIIPAILQSAALPF. At 205-269 the chain is on the cytoplasmic side; the sequence is CPESPRFLLI…LFKSPSYFQP (65 aa). Phosphothreonine is present on Thr-232. Residues 270–290 traverse the membrane as a helical segment; the sequence is LLISVVLQLSQQFSGINAVFY. An important for selectivity against fructose region spans residues 277-279; sequence QLS. Residues 280–281 and Asn-286 each bind D-glucose; that span reads QQ. Topologically, residues 291-304 are extracellular; the sequence is YSTGIFQDAGVQEP. The helical transmembrane segment at 305 to 325 threads the bilayer; the sequence is IYATIGAGVVNTIFTVVSLFL. Asn-315 contacts D-glucose. The Cytoplasmic segment spans residues 326–331; that stretch reads VERAGR. Residues 332–352 form a helical membrane-spanning segment; the sequence is RTLHMIGLGGMAVCSVFMTIS. The Extracellular segment spans residues 353 to 363; it reads LLLKDEYEAMS. A helical membrane pass occupies residues 364 to 389; sequence FVCIVAILVYVAFFEIGPGPIPWFIV. 2 residues coordinate D-glucose: Glu-378 and Trp-386. The Cytoplasmic portion of the chain corresponds to 390 to 399; it reads AELFSQGPRP. The helical transmembrane segment at 400–420 threads the bilayer; it reads AAMAVAGCSNWTSNFLVGMFF. Topologically, residues 421–429 are extracellular; the sequence is PSAAAYLGA. A helical transmembrane segment spans residues 430–450; the sequence is YVFIIFAAFLVFFLIFTSFKV. At 451–493 the chain is on the cytoplasmic side; the sequence is PETKGRTFEDITRAFEGQAHSGKGSAGVELNSMQPVKETPGNA. A phosphoserine mark is found at Ser-471, Ser-475, and Ser-482. Thr-489 is modified (phosphothreonine).

This sequence belongs to the major facilitator superfamily. Sugar transporter (TC 2.A.1.1) family. Glucose transporter subfamily. In terms of assembly, interacts with SMIM43; the interaction may promote SLC2A3-mediated glucose transport to meet the energy needs of mesendoderm differentiation. In terms of tissue distribution, brain and osteoblastic cells (at protein level). Highly expressed in brain.

Its subcellular location is the cell membrane. The protein localises to the perikaryon. The protein resides in the cell projection. It carries out the reaction D-glucose(out) = D-glucose(in). It catalyses the reaction D-galactose(in) = D-galactose(out). With respect to regulation, deoxyglucose transport is inhibited by D-glucose, D-galactose and maltose. Galactose transport is inhibited by D-glucose and maltose. Facilitative glucose transporter. Can also mediate the uptake of various other monosaccharides across the cell membrane. Mediates the uptake of glucose, 2-deoxyglucose, galactose, mannose, xylose and fucose, and probably also dehydroascorbate. Does not mediate fructose transport. Required for mesendoderm differentiation. The polypeptide is Solute carrier family 2, facilitated glucose transporter member 3 (Rattus norvegicus (Rat)).